The primary structure comprises 273 residues: Phycobilisome 32.1 kDa linker polypeptide, phycocyanin-associated, rod 2 (273 aa).

Residues 1-180 (MTSLVSAQRL…VYRGYATSDR (180 aa)) enclose the PBS-linker domain. A CpcD-like domain is found at 220-273 (NQMYRLQVIQGAAPGRGTRVRRGKAEYLVSYDNLSAKLQQINRQGDTVTMISLA).

The protein belongs to the phycobilisome linker protein family. Part of 2 PBS rod complexes, the conventional CpcG-PBS rod and a photosystem I-specific CpcL-PBS rod, both of which include ferredoxin--NADP reductase (petH). CpcG-PBS has on average 3 stacked phycocyanin hexamers (PC, CpcA and CpcB). Linker CpcG connects the PC stack to the thylakoid, the hexamers are linked by 1 copy of CpcC1, 1 copy of CpcC2 and the stack is terminated by a single copy of CpcD. The CpcL-PBS has on average 5 stacked phycocyanin hexamers (PC, CpcA and CpcB). Linker CpcL connects the PC stack to the thylakoid, the hexamers are linked by 1 copy of CpcC1, 3 copies of CpcC2 and the stack is terminated by a single copy of CpcD. Interacts with the C-phycocyanin (PC) beta subunit (cpcB), it may fit into the center of the PC hexamer.

It is found in the cellular thylakoid membrane. Rod linker protein, associated with phycocyanin. Linker polypeptides determine the state of aggregation and the location of the disk-shaped phycobiliprotein units within the phycobilisome and modulate their spectroscopic properties in order to mediate a directed and optimal energy transfer. This Synechocystis sp. (strain ATCC 27184 / PCC 6803 / Kazusa) protein is Phycobilisome 32.1 kDa linker polypeptide, phycocyanin-associated, rod 2 (cpcC2).